The primary structure comprises 76 residues: Tautomerase PptA (76 aa).

The Proton acceptor; via imino nitrogen role is filled by proline 2.

It belongs to the 4-oxalocrotonate tautomerase family. PptA subfamily. As to quaternary structure, homodimer.

The protein resides in the cytoplasm. The chain is Tautomerase PptA from Pectobacterium carotovorum subsp. carotovorum (strain PC1).